A 180-amino-acid polypeptide reads, in one-letter code: NAD(P)H-quinone oxidoreductase subunit I, chloroplastic (180 aa).

4Fe-4S ferredoxin-type domains are found at residues 55 to 84 (GRIH…VDWK) and 95 to 124 (LNYS…MTEE). Positions 64, 67, 70, 74, 104, 107, 110, and 114 each coordinate [4Fe-4S] cluster.

Belongs to the complex I 23 kDa subunit family. As to quaternary structure, NDH is composed of at least 16 different subunits, 5 of which are encoded in the nucleus. The cofactor is [4Fe-4S] cluster.

The protein localises to the plastid. Its subcellular location is the chloroplast thylakoid membrane. It catalyses the reaction a plastoquinone + NADH + (n+1) H(+)(in) = a plastoquinol + NAD(+) + n H(+)(out). It carries out the reaction a plastoquinone + NADPH + (n+1) H(+)(in) = a plastoquinol + NADP(+) + n H(+)(out). Functionally, NDH shuttles electrons from NAD(P)H:plastoquinone, via FMN and iron-sulfur (Fe-S) centers, to quinones in the photosynthetic chain and possibly in a chloroplast respiratory chain. The immediate electron acceptor for the enzyme in this species is believed to be plastoquinone. Couples the redox reaction to proton translocation, and thus conserves the redox energy in a proton gradient. The sequence is that of NAD(P)H-quinone oxidoreductase subunit I, chloroplastic from Ranunculus macranthus (Large buttercup).